The chain runs to 120 residues: Large ribosomal subunit protein bL20 (120 aa).

This sequence belongs to the bacterial ribosomal protein bL20 family.

Binds directly to 23S ribosomal RNA and is necessary for the in vitro assembly process of the 50S ribosomal subunit. It is not involved in the protein synthesizing functions of that subunit. In Karelsulcia muelleri (strain GWSS) (Sulcia muelleri), this protein is Large ribosomal subunit protein bL20.